The primary structure comprises 326 residues: Vacuolar protein sorting-associated protein 26A-B (326 aa).

The protein belongs to the VPS26 family. Component of the heterotrimeric retromer cargo-selective complex (CSC) which is believed to associate with variable sorting nexins to form functionally distinct retromer complex variants.

The protein localises to the cytoplasm. The protein resides in the endosome membrane. Its subcellular location is the early endosome. Acts as a component of the retromer cargo-selective complex (CSC). The CSC is believed to be the core functional component of retromer or respective retromer complex variants acting to prevent missorting of selected transmembrane cargo proteins into the lysosomal degradation pathway. Retromer mediates retrograde transport of cargo proteins from endosomes to the trans-Golgi network (TGN). The sequence is that of Vacuolar protein sorting-associated protein 26A-B (vps26a-b) from Xenopus laevis (African clawed frog).